A 255-amino-acid polypeptide reads, in one-letter code: Imidazole glycerol phosphate synthase subunit HisF (255 aa).

Active-site residues include Asp-11 and Asp-130.

Belongs to the HisA/HisF family. Heterodimer of HisH and HisF.

The protein localises to the cytoplasm. It carries out the reaction 5-[(5-phospho-1-deoxy-D-ribulos-1-ylimino)methylamino]-1-(5-phospho-beta-D-ribosyl)imidazole-4-carboxamide + L-glutamine = D-erythro-1-(imidazol-4-yl)glycerol 3-phosphate + 5-amino-1-(5-phospho-beta-D-ribosyl)imidazole-4-carboxamide + L-glutamate + H(+). It participates in amino-acid biosynthesis; L-histidine biosynthesis; L-histidine from 5-phospho-alpha-D-ribose 1-diphosphate: step 5/9. Its function is as follows. IGPS catalyzes the conversion of PRFAR and glutamine to IGP, AICAR and glutamate. The HisF subunit catalyzes the cyclization activity that produces IGP and AICAR from PRFAR using the ammonia provided by the HisH subunit. The sequence is that of Imidazole glycerol phosphate synthase subunit HisF from Rhodopseudomonas palustris (strain ATCC BAA-98 / CGA009).